A 407-amino-acid chain; its full sequence is F-box protein SKIP23 (407 aa).

One can recognise an F-box domain in the interval 2-50 (VDWSTLPKDLLDLISKSLESSFDLIQFRSVCSSWRSAAEPKSPLPTHHL).

As to quaternary structure, part of a SCF (ASK-cullin-F-box) protein ligase complex. Interacts with SKP1A/ASK1.

The protein resides in the nucleus. The protein operates within protein modification; protein ubiquitination. Its function is as follows. Component of SCF(ASK-cullin-F-box) E3 ubiquitin ligase complexes, which may mediate the ubiquitination and subsequent proteasomal degradation of target proteins. This chain is F-box protein SKIP23 (SKIP23), found in Arabidopsis thaliana (Mouse-ear cress).